The chain runs to 192 residues: N-terminal acetyltransferase A complex catalytic subunit NAA10 (192 aa).

The 151-residue stretch at 2–152 folds into the N-acetyltransferase domain; sequence VCIRRATVDD…DAYDMRKNLK (151 aa).

This sequence belongs to the acetyltransferase family. ARD1 subfamily. In terms of assembly, part of the NatA complex. Interacts with NAA15. In terms of tissue distribution, expressed in leaves, roots, shoots and flowers.

The catalysed reaction is N-terminal glycyl-[protein] + acetyl-CoA = N-terminal N(alpha)-acetylglycyl-[protein] + CoA + H(+). It carries out the reaction N-terminal L-alanyl-[protein] + acetyl-CoA = N-terminal N(alpha)-acetyl-L-alanyl-[protein] + CoA + H(+). It catalyses the reaction N-terminal L-seryl-[protein] + acetyl-CoA = N-terminal N(alpha)-acetyl-L-seryl-[protein] + CoA + H(+). The enzyme catalyses N-terminal L-valyl-[protein] + acetyl-CoA = N-terminal N(alpha)-acetyl-L-valyl-[protein] + CoA + H(+). The catalysed reaction is N-terminal L-cysteinyl-[protein] + acetyl-CoA = N-terminal N(alpha)-acetyl-L-cysteinyl-[protein] + CoA + H(+). It carries out the reaction N-terminal L-threonyl-[protein] + acetyl-CoA = N-terminal N(alpha)-acetyl-L-threonyl-[protein] + CoA + H(+). Its function is as follows. Catalytic subunit of the NatA N-alpha-acetyltransferase complex. Required for male gametocyte development, embryogenesis, suspensor development and the formation of the quiescent center (QC) in the root meristem. Involved in plant immunity through the regulation of SNC1 and RPM1 stability. This Arabidopsis thaliana (Mouse-ear cress) protein is N-terminal acetyltransferase A complex catalytic subunit NAA10.